The sequence spans 1524 residues: DNA-directed RNA polymerase subunit beta' (1524 aa).

4 residues coordinate Zn(2+): C58, C60, C73, and C76. Residues D739, D741, and D743 each coordinate Mg(2+). Residues C1112, C1194, C1201, and C1204 each contribute to the Zn(2+) site. The interval 1501-1524 (EAVEAKERPAARRGVKREQPGKQA) is disordered.

This sequence belongs to the RNA polymerase beta' chain family. In terms of assembly, the RNAP catalytic core consists of 2 alpha, 1 beta, 1 beta' and 1 omega subunit. When a sigma factor is associated with the core the holoenzyme is formed, which can initiate transcription. Mg(2+) is required as a cofactor. Requires Zn(2+) as cofactor.

The enzyme catalyses RNA(n) + a ribonucleoside 5'-triphosphate = RNA(n+1) + diphosphate. Functionally, DNA-dependent RNA polymerase catalyzes the transcription of DNA into RNA using the four ribonucleoside triphosphates as substrates. The chain is DNA-directed RNA polymerase subunit beta' from Thermus thermophilus (strain ATCC BAA-163 / DSM 7039 / HB27).